Consider the following 355-residue polypeptide: UDP-N-acetylglucosamine--N-acetylmuramyl-(pentapeptide) pyrophosphoryl-undecaprenol N-acetylglucosamine transferase (355 aa).

Residues 15–17, Asn-127, Arg-163, Ser-191, Ile-244, 263–268, and Gln-288 contribute to the UDP-N-acetyl-alpha-D-glucosamine site; these read TGG and ALTVSE.

The protein belongs to the glycosyltransferase 28 family. MurG subfamily.

The protein localises to the cell inner membrane. The catalysed reaction is di-trans,octa-cis-undecaprenyl diphospho-N-acetyl-alpha-D-muramoyl-L-alanyl-D-glutamyl-meso-2,6-diaminopimeloyl-D-alanyl-D-alanine + UDP-N-acetyl-alpha-D-glucosamine = di-trans,octa-cis-undecaprenyl diphospho-[N-acetyl-alpha-D-glucosaminyl-(1-&gt;4)]-N-acetyl-alpha-D-muramoyl-L-alanyl-D-glutamyl-meso-2,6-diaminopimeloyl-D-alanyl-D-alanine + UDP + H(+). The protein operates within cell wall biogenesis; peptidoglycan biosynthesis. Functionally, cell wall formation. Catalyzes the transfer of a GlcNAc subunit on undecaprenyl-pyrophosphoryl-MurNAc-pentapeptide (lipid intermediate I) to form undecaprenyl-pyrophosphoryl-MurNAc-(pentapeptide)GlcNAc (lipid intermediate II). This is UDP-N-acetylglucosamine--N-acetylmuramyl-(pentapeptide) pyrophosphoryl-undecaprenol N-acetylglucosamine transferase from Photorhabdus laumondii subsp. laumondii (strain DSM 15139 / CIP 105565 / TT01) (Photorhabdus luminescens subsp. laumondii).